Reading from the N-terminus, the 202-residue chain is CASP-like protein 1E1 (202 aa).

At 1–33 the chain is on the cytoplasmic side; sequence MESQCRPNVDGVHNGVESHVKVVEKPRSVGSSS. A helical membrane pass occupies residues 34 to 54; sequence EFVLRILGLLLTLIAAVVAGV. At 55–85 the chain is on the extracellular side; it reads DKQTKIIPLTLIKTLPSLHVPVTAKWSDMSA. A helical transmembrane segment spans residues 86-106; it reads FVYLVVSNAIACSYAAISLVL. Residues 107 to 118 are Cytoplasmic-facing; sequence VTMLGRRGKGGR. The helical transmembrane segment at 119-139 threads the bilayer; it reads VLAVIVLDLHMVGLLFSANGA. Residues 140 to 172 lie on the Extracellular side of the membrane; that stretch reads ATAVGVLGQYGNSHVEWKKVCNVFDSFCHHLVA. Residues 173-193 form a helical membrane-spanning segment; it reads SLALSFLGSLSFLGLVLLAIL. At 194–202 the chain is on the cytoplasmic side; sequence NLHKKSSTK.

The protein belongs to the Casparian strip membrane proteins (CASP) family. As to quaternary structure, homodimer and heterodimers.

The protein localises to the cell membrane. The sequence is that of CASP-like protein 1E1 from Vitis vinifera (Grape).